A 702-amino-acid chain; its full sequence is Ribosomal RNA large subunit methyltransferase K/L (702 aa).

The 112-residue stretch at 43–154 (LVYQSLMWSR…KETASIALDL (112 aa)) folds into the THUMP domain.

The protein belongs to the methyltransferase superfamily. RlmKL family.

The protein localises to the cytoplasm. It catalyses the reaction guanosine(2445) in 23S rRNA + S-adenosyl-L-methionine = N(2)-methylguanosine(2445) in 23S rRNA + S-adenosyl-L-homocysteine + H(+). It carries out the reaction guanosine(2069) in 23S rRNA + S-adenosyl-L-methionine = N(2)-methylguanosine(2069) in 23S rRNA + S-adenosyl-L-homocysteine + H(+). Functionally, specifically methylates the guanine in position 2445 (m2G2445) and the guanine in position 2069 (m7G2069) of 23S rRNA. In Escherichia coli (strain SMS-3-5 / SECEC), this protein is Ribosomal RNA large subunit methyltransferase K/L.